We begin with the raw amino-acid sequence, 356 residues long: Thymidine kinase (356 aa).

Residues 1–29 (MMDSRATYVPPKKISESNSNAEEDPTDCS) are disordered. An ATP-binding site is contributed by 61 to 68 (GCVGVGKT). Glutamate 86 serves as the catalytic Proton acceptor. Glutamine 122 contributes to the substrate binding site. Residue arginine 208 coordinates ATP. Position 214 (arginine 214) interacts with substrate.

It belongs to the herpesviridae thymidine kinase family. As to quaternary structure, homodimer.

The catalysed reaction is thymidine + ATP = dTMP + ADP + H(+). Catalyzes the transfer of the gamma-phospho group of ATP to thymidine to generate dTMP in the salvage pathway of pyrimidine synthesis. The dTMP serves as a substrate for DNA polymerase during viral DNA replication. Allows the virus to be reactivated and to grow in non-proliferative cells lacking a high concentration of phosphorylated nucleic acid precursors. The protein is Thymidine kinase of Elephas maximus (Indian elephant).